The following is a 206-amino-acid chain: Small ribosomal subunit protein eS1 (206 aa).

It belongs to the eukaryotic ribosomal protein eS1 family.

This is Small ribosomal subunit protein eS1 from Methanocorpusculum labreanum (strain ATCC 43576 / DSM 4855 / Z).